The chain runs to 349 residues: uncharacterized protein (349 aa).

An N-terminal signal peptide occupies residues M1–S29.

This is an uncharacterized protein from Borreliella burgdorferi (strain ATCC 35210 / DSM 4680 / CIP 102532 / B31) (Borrelia burgdorferi).